The primary structure comprises 524 residues: Keratin, type II cytoskeletal 71 (524 aa).

The segment at 1 to 130 (MNRQFTCKSG…DPEIQKVRAQ (130 aa)) is head. Positions 131-166 (EREQIKALNNKFASFIDKVRFLEQQNQVLETKWELL) are coil 1A. The region spanning 131-444 (EREQIKALNN…KLLESEECRM (314 aa)) is the IF rod domain. Positions 167–185 (QQLDLNNCKNNLEPILEGY) are linker 1. Residues 186-277 (ISNLRKQLET…CLYEAEIAQI (92 aa)) are coil 1B. Residues 278-301 (QSHISDMSVILSMDNNRDLNLDSI) are linker 12. Residues 302-440 (IDEVRAQYEE…ATYRKLLESE (139 aa)) form a coil 2 region. A tail region spans residues 441–524 (ECRMSGEFPS…QSASSKKASR (84 aa)). A disordered region spans residues 491–524 (VRGGEGRSRGSTSDYKDTLGKGSSQSASSKKASR). The segment covering 494 to 509 (GEGRSRGSTSDYKDTL) has biased composition (basic and acidic residues). Residues 510 to 524 (GKGSSQSASSKKASR) show a composition bias toward low complexity.

This sequence belongs to the intermediate filament family. As to quaternary structure, heterodimer of a type I and a type II keratin. Associates with KRT16 and/or KRT17.

The protein localises to the cytoplasm. It is found in the cytoskeleton. In terms of biological role, plays a central role in hair formation. Essential component of keratin intermediate filaments in the inner root sheath (IRS) of the hair follicle. This Felis catus (Cat) protein is Keratin, type II cytoskeletal 71 (KRT71).